A 176-amino-acid polypeptide reads, in one-letter code: MKNKHPLSKDELQLFRESVVDAKKLRQDTIVHRKPKPKTKQIAPQRLLQEQVDASHYFSDEYQPQLEEEGPTRYVRPGYSAFELKKLRRGDYSPELFLDLHGLTQMQAKQELGALIAACRREHVHCACVMHGHGKHILKQQTPLWLAQHPDVLVFHQAPKEWGGTAAILLLVELAE.

One can recognise a Smr domain in the interval 98–173 (LDLHGLTQMQ…GTAAILLLVE (76 aa)).

The protein belongs to the SmrB family. In terms of assembly, associates with collided ribosomes, but not with correctly translating polysomes.

Its function is as follows. Acts as a ribosome collision sensor. Detects stalled/collided disomes (pairs of ribosomes where the leading ribosome is stalled and a second ribosome has collided with it) and endonucleolytically cleaves mRNA at the 5' boundary of the stalled ribosome. Stalled/collided disomes form a new interface (primarily via the 30S subunits) that binds SmrB. Cleaved mRNA becomes available for tmRNA ligation, leading to ribosomal subunit dissociation and rescue of stalled ribosomes. The sequence is that of Ribosome rescue factor SmrB from Serratia proteamaculans (strain 568).